The following is a 43-amino-acid chain: Metallothionein B (43 aa).

The interval 1–16 (SCAGSCKCKNCRCRSC) is beta. A divalent metal cation-binding residues include cysteine 2, cysteine 6, cysteine 8, cysteine 11, cysteine 13, cysteine 16, cysteine 20, cysteine 21, cysteine 23, cysteine 24, cysteine 28, cysteine 31, cysteine 35, and cysteine 37. Residues 17-43 (RKSCCSCCPAGCNNCVKGCVCKEPASS) are alpha.

The protein belongs to the metallothionein superfamily. Type 1 family.

Functionally, metallothioneins have a high content of cysteine residues that bind various heavy metals. In Colinus virginianus (Northern bobwhite), this protein is Metallothionein B.